The primary structure comprises 114 residues: Class I hydrophobin SC16 (114 aa).

Positions 1–17 are cleaved as a signal peptide; that stretch reads MRFFATLVLALPALAMA. 4 cysteine pairs are disulfide-bonded: Cys-33–Cys-93, Cys-40–Cys-87, Cys-41–Cys-74, and Cys-94–Cys-107. An N-linked (GlcNAc...) asparagine glycan is attached at Asn-42.

Belongs to the fungal hydrophobin family. Self-assembles to form functional amyloid fibrils called rodlets. Self-assembly into fibrillar rodlets occurs spontaneously at hydrophobic:hydrophilic interfaces and the rodlets further associate laterally to form amphipathic monolayers.

It localises to the secreted. It is found in the cell wall. Functionally, aerial growth, conidiation, and dispersal of filamentous fungi in the environment rely upon a capability of their secreting small amphipathic proteins called hydrophobins (HPBs) with low sequence identity. Class I can self-assemble into an outermost layer of rodlet bundles on aerial cell surfaces, conferring cellular hydrophobicity that supports fungal growth, development and dispersal; whereas Class II form highly ordered films at water-air interfaces through intermolecular interactions but contribute nothing to the rodlet structure. The protein is Class I hydrophobin SC16 of Schizophyllum commune (strain H4-8 / FGSC 9210) (Split gill fungus).